Reading from the N-terminus, the 161-residue chain is MORN repeat-containing protein 5 (161 aa).

MORN repeat units lie at residues 8 to 30, 31 to 53, and 54 to 75; these read YIGE…TETI, YVGE…SGSQ, and YDAI…DGLH.

As to expression, expressed in sperm (at protein level).

The protein resides in the cell projection. Its subcellular location is the cilium. The protein localises to the flagellum. This chain is MORN repeat-containing protein 5 (MORN5), found in Homo sapiens (Human).